The following is a 527-amino-acid chain: Protein Lilipod (527 aa).

Over 1-22 the chain is Extracellular; sequence MDEEEEEEVTDLKLQLFHNTVR. Residues 23–43 traverse the membrane as a helical segment; sequence EHIIFLLLIILLYSSSYVVVS. The Cytoplasmic portion of the chain corresponds to 44–65; it reads RFRRRDRDDLYSNDEDEVLVYR. A helical membrane pass occupies residues 66–86; sequence ISFWLCTFTLAVAEGAAMLLP. Residues 87–117 are Extracellular-facing; that stretch reads VSIASNEVLLLYPNSYYVKWLNSSLIQGLWN. The helical transmembrane segment at 118 to 138 threads the bilayer; it reads HVFLFSNLSLFIFLPFVYLFS. The Cytoplasmic segment spans residues 139-160; sequence ESTGFVGNKKGILPRVYETFTV. A helical membrane pass occupies residues 161–181; sequence FMLMAIIVLVLTAVLSAVFGI. Residues 182 to 194 are Extracellular-facing; that stretch reads EKLQFFWFLNLGS. Residues 195–215 form a helical membrane-spanning segment; it reads VHLPFLYSCVSFLGVMLMLIC. Over 216 to 341 the chain is Cytoplasmic; the sequence is TPYGFVRLFG…LRTSSTFQRT (126 aa). A helical transmembrane segment spans residues 342–362; the sequence is FVYPLAMLLLLFCTAVTILLV. Residues 363-395 lie on the Extracellular side of the membrane; the sequence is VQNTLELLIGIKALPLSTRQFALGISSLSKLGP. The chain crosses the membrane as a helical span at residues 396–416; the sequence is FGAGLEVCLIFYLGATSVVGF. The Cytoplasmic portion of the chain corresponds to 417–433; that stretch reads YSMPFMRKVCPKRRQTS. A helical transmembrane segment spans residues 434–454; that stretch reads LPQLMLNCGFMLVLSSALPLL. At 455-468 the chain is on the extracellular side; it reads SRIIGITNFDLLGD. The helical transmembrane segment at 469–489 threads the bilayer; that stretch reads FGAIEWLGNFQIVLLYNLVFG. The Cytoplasmic segment spans residues 490–527; it reads TTTALCLANKFTATVRRELRARLVENYVLFTNYISFIN.

Belongs to the LIMR family. In the ovary, detected in germline stem cells and their progeny. Also detected in the somatic follicular epithelium.

Its subcellular location is the cell membrane. In terms of biological role, required during oogenesis to promote self-renewal of germline stem cells, probably by enhancing BMP signaling activity. The sequence is that of Protein Lilipod from Drosophila melanogaster (Fruit fly).